Reading from the N-terminus, the 1207-residue chain is DNA-directed RNA polymerase subunit beta' (1207 aa).

Zn(2+)-binding residues include Cys60, Cys62, Cys75, and Cys78. Asp449, Asp451, and Asp453 together coordinate Mg(2+). Zn(2+) contacts are provided by Cys822, Cys896, Cys903, and Cys906.

This sequence belongs to the RNA polymerase beta' chain family. In terms of assembly, the RNAP catalytic core consists of 2 alpha, 1 beta, 1 beta' and 1 omega subunit. When a sigma factor is associated with the core the holoenzyme is formed, which can initiate transcription. The cofactor is Mg(2+). It depends on Zn(2+) as a cofactor.

It catalyses the reaction RNA(n) + a ribonucleoside 5'-triphosphate = RNA(n+1) + diphosphate. In terms of biological role, DNA-dependent RNA polymerase catalyzes the transcription of DNA into RNA using the four ribonucleoside triphosphates as substrates. This Staphylococcus epidermidis (strain ATCC 35984 / DSM 28319 / BCRC 17069 / CCUG 31568 / BM 3577 / RP62A) protein is DNA-directed RNA polymerase subunit beta'.